A 203-amino-acid chain; its full sequence is GTP cyclohydrolase 1 (203 aa).

Zn(2+) contacts are provided by C87, H90, and C158.

The protein belongs to the GTP cyclohydrolase I family. As to quaternary structure, toroid-shaped homodecamer, composed of two pentamers of five dimers.

It catalyses the reaction GTP + H2O = 7,8-dihydroneopterin 3'-triphosphate + formate + H(+). It participates in cofactor biosynthesis; 7,8-dihydroneopterin triphosphate biosynthesis; 7,8-dihydroneopterin triphosphate from GTP: step 1/1. The chain is GTP cyclohydrolase 1 from Xylella fastidiosa (strain 9a5c).